A 503-amino-acid chain; its full sequence is MAAALRFDNIGKVFPGVRALDGISFDVQAGQVHGLMGENGAGKSTLLKILGGEYQPDSGGVLVDGQAMRFPSAAASIAAGVAVIHQELQYVPDLTVAENLLLGRLPSALGWVRKHTAQRFVRERLAAMGVDLDPQAKLRRLSIAQRQMVEICKALMRNARVIALDEPTSSLSHRETEVLFKLVDDLRRDGRALIYISHRMDEIYRLCDACTIFRDGRQVASHASLAQVPRETLVRQMVGREISDIYHYEPRALGDVRLSARALEGDALRSGASFDVRAGEIVGFFGLVGAGRSELMRVIYGADRRTGGALTLDGKPLDIRSTRDAIRHGIVLCPEDRKEEGIVAHASVAENINISCRRHALRAGLFLDLKREAETAERFIKLLKIKTPNRRQKIRFLSGGNQQKAILARWLAEPDLKVVILDEPTRGIDVGAKHEIYGVIYELAKRGCAIVMVSSELPEVLGVSDRIVVMREGRIAGELARGEANEEAVLNLALPQGAIAHAA.

ABC transporter domains lie at 5-240 (LRFD…MVGR) and 253-497 (LGDV…LPQG). 37-44 (GENGAGKS) lines the ATP pocket.

Belongs to the ABC transporter superfamily. Arabinose importer (TC 3.A.1.2.2) family. In terms of assembly, the complex is composed of two ATP-binding proteins (AraG), two transmembrane proteins (AraH) and a solute-binding protein (AraF).

The protein localises to the cell inner membrane. The catalysed reaction is L-arabinose(out) + ATP + H2O = L-arabinose(in) + ADP + phosphate + H(+). Part of the ABC transporter complex AraFGH involved in arabinose import. Responsible for energy coupling to the transport system. In Burkholderia thailandensis (strain ATCC 700388 / DSM 13276 / CCUG 48851 / CIP 106301 / E264), this protein is Arabinose import ATP-binding protein AraG 1.